We begin with the raw amino-acid sequence, 114 residues long: Cuticle protein AMP5 (114 aa).

The residue at position 1 (Gln1) is a Pyrrolidone carboxylic acid. Residues 18 to 83 enclose the Chitin-binding type R&amp;R domain; the sequence is AGNYFYEFET…VDSPLIPVAP (66 aa).

Arthrodial membrane.

This Homarus americanus (American lobster) protein is Cuticle protein AMP5.